We begin with the raw amino-acid sequence, 341 residues long: Biotin synthase (341 aa).

The Radical SAM core domain occupies 53–272 (NHVETASLLS…IAVARIMMPK (220 aa)). C68, C72, and C75 together coordinate [4Fe-4S] cluster. Positions 112, 143, 203, and 276 each coordinate [2Fe-2S] cluster.

It belongs to the radical SAM superfamily. Biotin synthase family. In terms of assembly, homodimer. The cofactor is [4Fe-4S] cluster. [2Fe-2S] cluster serves as cofactor.

The enzyme catalyses (4R,5S)-dethiobiotin + (sulfur carrier)-SH + 2 reduced [2Fe-2S]-[ferredoxin] + 2 S-adenosyl-L-methionine = (sulfur carrier)-H + biotin + 2 5'-deoxyadenosine + 2 L-methionine + 2 oxidized [2Fe-2S]-[ferredoxin]. The protein operates within cofactor biosynthesis; biotin biosynthesis; biotin from 7,8-diaminononanoate: step 2/2. In terms of biological role, catalyzes the conversion of dethiobiotin (DTB) to biotin by the insertion of a sulfur atom into dethiobiotin via a radical-based mechanism. In Nitrobacter winogradskyi (strain ATCC 25391 / DSM 10237 / CIP 104748 / NCIMB 11846 / Nb-255), this protein is Biotin synthase.